Here is a 427-residue protein sequence, read N- to C-terminus: Gamma-glutamyl phosphate reductase (427 aa).

This sequence belongs to the gamma-glutamyl phosphate reductase family.

Its subcellular location is the cytoplasm. It catalyses the reaction L-glutamate 5-semialdehyde + phosphate + NADP(+) = L-glutamyl 5-phosphate + NADPH + H(+). Its pathway is amino-acid biosynthesis; L-proline biosynthesis; L-glutamate 5-semialdehyde from L-glutamate: step 2/2. Functionally, catalyzes the NADPH-dependent reduction of L-glutamate 5-phosphate into L-glutamate 5-semialdehyde and phosphate. The product spontaneously undergoes cyclization to form 1-pyrroline-5-carboxylate. This is Gamma-glutamyl phosphate reductase from Rhizobium rhizogenes (strain K84 / ATCC BAA-868) (Agrobacterium radiobacter).